Consider the following 123-residue polypeptide: Small ribosomal subunit protein uS12 (123 aa).

The disordered stretch occupies residues 1–26; sequence MPTLNQLVRKPRKRPVAKSKVPALDA. Position 89 is a 3-methylthioaspartic acid (D89). Positions 104 to 123 are disordered; the sequence is TAGVKNRKQSRSKYGAKRPK. A compositionally biased stretch (basic residues) spans 108–123; the sequence is KNRKQSRSKYGAKRPK.

The protein belongs to the universal ribosomal protein uS12 family. In terms of assembly, part of the 30S ribosomal subunit. Contacts proteins S8 and S17. May interact with IF1 in the 30S initiation complex.

Functionally, with S4 and S5 plays an important role in translational accuracy. Its function is as follows. Interacts with and stabilizes bases of the 16S rRNA that are involved in tRNA selection in the A site and with the mRNA backbone. Located at the interface of the 30S and 50S subunits, it traverses the body of the 30S subunit contacting proteins on the other side and probably holding the rRNA structure together. The combined cluster of proteins S8, S12 and S17 appears to hold together the shoulder and platform of the 30S subunit. The sequence is that of Small ribosomal subunit protein uS12 from Acidithiobacillus ferrooxidans (strain ATCC 23270 / DSM 14882 / CIP 104768 / NCIMB 8455) (Ferrobacillus ferrooxidans (strain ATCC 23270)).